Here is a 98-residue protein sequence, read N- to C-terminus: Large ribosomal subunit protein uL23 (98 aa).

The protein belongs to the universal ribosomal protein uL23 family. Part of the 50S ribosomal subunit. Contacts protein L29, and trigger factor when it is bound to the ribosome.

One of the early assembly proteins it binds 23S rRNA. One of the proteins that surrounds the polypeptide exit tunnel on the outside of the ribosome. Forms the main docking site for trigger factor binding to the ribosome. This is Large ribosomal subunit protein uL23 from Thioalkalivibrio sulfidiphilus (strain HL-EbGR7).